The chain runs to 255 residues: Hydroxyacylglutathione hydrolase (255 aa).

Zn(2+) contacts are provided by His56, His58, Asp60, His61, His114, Asp133, and His171.

It belongs to the metallo-beta-lactamase superfamily. Glyoxalase II family. As to quaternary structure, monomer. Requires Zn(2+) as cofactor.

The enzyme catalyses an S-(2-hydroxyacyl)glutathione + H2O = a 2-hydroxy carboxylate + glutathione + H(+). It functions in the pathway secondary metabolite metabolism; methylglyoxal degradation; (R)-lactate from methylglyoxal: step 2/2. Thiolesterase that catalyzes the hydrolysis of S-D-lactoyl-glutathione to form glutathione and D-lactic acid. This chain is Hydroxyacylglutathione hydrolase, found in Cereibacter sphaeroides (strain ATCC 17029 / ATH 2.4.9) (Rhodobacter sphaeroides).